Here is a 561-residue protein sequence, read N- to C-terminus: Urocanate hydratase (561 aa).

Residues 52–53 (GG), glutamine 130, 176–178 (GMG), glutamate 196, arginine 201, 242–243 (NA), 263–267 (QTSAH), 273–274 (YL), and tyrosine 322 each bind NAD(+). The active site involves cysteine 410. Residue glycine 492 participates in NAD(+) binding.

This sequence belongs to the urocanase family. It depends on NAD(+) as a cofactor.

The protein localises to the cytoplasm. The catalysed reaction is 4-imidazolone-5-propanoate = trans-urocanate + H2O. It participates in amino-acid degradation; L-histidine degradation into L-glutamate; N-formimidoyl-L-glutamate from L-histidine: step 2/3. Functionally, catalyzes the conversion of urocanate to 4-imidazolone-5-propionate. This Salmonella choleraesuis (strain SC-B67) protein is Urocanate hydratase.